A 288-amino-acid chain; its full sequence is ATP synthase gamma chain (288 aa).

Belongs to the ATPase gamma chain family. As to quaternary structure, F-type ATPases have 2 components, CF(1) - the catalytic core - and CF(0) - the membrane proton channel. CF(1) has five subunits: alpha(3), beta(3), gamma(1), delta(1), epsilon(1). CF(0) has three main subunits: a, b and c.

Its subcellular location is the cell membrane. Its function is as follows. Produces ATP from ADP in the presence of a proton gradient across the membrane. The gamma chain is believed to be important in regulating ATPase activity and the flow of protons through the CF(0) complex. In Staphylococcus haemolyticus (strain JCSC1435), this protein is ATP synthase gamma chain.